Reading from the N-terminus, the 161-residue chain is Troponin C, slow skeletal and cardiac muscles (161 aa).

N-acetylmethionine is present on methionine 1. 4 EF-hand domains span residues 16–51 (QKNEFKAAFDIFVLGAEDGCISTKELGKVMRMLGQN), 52–87 (PTPEELQEMIDEVDEDGSGTVDFDEFLVMMVRCMKD), 92–127 (KTEEELSDLFRMFDKNADGYIDLEELKIMLQATGET), and 128–161 (ITEDDIEELMKDGDKNNDGRIDYDEFLEFMKGVE). Residues aspartate 65, aspartate 67, serine 69, threonine 71, glutamate 76, aspartate 105, asparagine 107, aspartate 109, tyrosine 111, glutamate 116, aspartate 141, asparagine 143, aspartate 145, arginine 147, and glutamate 152 each coordinate Ca(2+).

The protein belongs to the troponin C family.

Functionally, troponin is the central regulatory protein of striated muscle contraction. Tn consists of three components: Tn-I which is the inhibitor of actomyosin ATPase, Tn-T which contains the binding site for tropomyosin and Tn-C. The binding of calcium to Tn-C abolishes the inhibitory action of Tn on actin filaments. The sequence is that of Troponin C, slow skeletal and cardiac muscles (TNNC1) from Gallus gallus (Chicken).